Consider the following 189-residue polypeptide: Prostaglandin-H2 D-isomerase (189 aa).

The signal sequence occupies residues 1–24 (MAALRMLWMGLVLLGLLGFPQTPA). Gln25 is subject to Pyrrolidone carboxylic acid. The N-linked (GlcNAc...) asparagine glycan is linked to Asn51. The active-site Nucleophile is Cys65. An N-linked (GlcNAc...) asparagine glycan is attached at Asn78. A disulfide bridge connects residues Cys89 and Cys186.

Belongs to the calycin superfamily. Lipocalin family. In terms of assembly, monomer. As to expression, abundant in the brain and CNS, where it is expressed in tissues of the blood-brain barrier and secreted into the cerebro-spinal fluid. In the male reproductive system, it is expressed in the testis, efferent ducts and epididymis, and is secreted into the seminal fluid. In the eye, it is expressed in the pigmented epithelium of the retina and the nonpigmented epithelium of the ciliary body, and secreted into the aqueous humor. Low levels detected in various tissue fluids such as serum, normal urine, ascitic fluid and tear fluid. Also found in a number of other organs including the ear, heart and lung.

The protein localises to the rough endoplasmic reticulum. Its subcellular location is the nucleus membrane. It localises to the golgi apparatus. The protein resides in the cytoplasm. It is found in the perinuclear region. The protein localises to the secreted. The enzyme catalyses prostaglandin H2 = prostaglandin D2. In terms of biological role, catalyzes the conversion of PGH2 to PGD2, a prostaglandin involved in smooth muscle contraction/relaxation and a potent inhibitor of platelet aggregation. Involved in a variety of CNS functions, such as sedation, NREM sleep and PGE2-induced allodynia, and may have an anti-apoptotic role in oligodendrocytes. Binds small non-substrate lipophilic molecules, including biliverdin, bilirubin, retinal, retinoic acid and thyroid hormone, and may act as a scavenger for harmful hydrophobic molecules and as a secretory retinoid and thyroid hormone transporter. Possibly involved in development and maintenance of the blood-brain, blood-retina, blood-aqueous humor and blood-testis barrier. It is likely to play important roles in both maturation and maintenance of the central nervous system and male reproductive system. Involved in PLA2G3-dependent maturation of mast cells. PLA2G3 is secreted by immature mast cells and acts on nearby fibroblasts upstream to PTDGS to synthesize PGD2, which in turn promotes mast cell maturation and degranulation via PTGDR. This chain is Prostaglandin-H2 D-isomerase (Ptgds), found in Mus musculus (Mouse).